Consider the following 313-residue polypeptide: Arabinooligosaccharides transport system permease protein AraP (313 aa).

6 consecutive transmembrane segments (helical) span residues 39-59 (FVLS…IMSF), 91-111 (LEYT…LAIF), 126-146 (ALFI…RLIF), 176-196 (MFLM…LYFL), 224-244 (ITLP…IIGG), and 281-301 (MGYG…VSLI). The region spanning 87-302 (LWNTLEYTFW…IVILVVSLIS (216 aa)) is the ABC transmembrane type-1 domain.

It belongs to the binding-protein-dependent transport system permease family. MalFG subfamily. The complex is composed of two ATP-binding proteins (MsmX), two transmembrane proteins (AraP and AraQ) and a solute-binding protein (AraN).

The protein resides in the cell membrane. Part of the ABC transporter complex AraNPQ involved in the uptake of arabinooligosaccharides. Transports alpha-1,5-arabinooligosaccharides, at least up to four L-arabinosyl units. Responsible for the translocation of the substrate across the membrane. The chain is Arabinooligosaccharides transport system permease protein AraP from Bacillus subtilis (strain 168).